The following is a 265-amino-acid chain: Type II pantothenate kinase (265 aa).

6–13 (DAGGTLIK) contacts ATP. The active-site Proton acceptor is Glu70. Residues Thr99, 121–125 (GGMIQ), Tyr137, and Ser225 each bind ATP.

It belongs to the type II pantothenate kinase family. In terms of assembly, homodimer.

It is found in the cytoplasm. The catalysed reaction is (R)-pantothenate + ATP = (R)-4'-phosphopantothenate + ADP + H(+). It functions in the pathway cofactor biosynthesis; coenzyme A biosynthesis; CoA from (R)-pantothenate: step 1/5. Functionally, catalyzes the phosphorylation of pantothenate (Pan), the first step in CoA biosynthesis. The sequence is that of Type II pantothenate kinase from Staphylococcus saprophyticus subsp. saprophyticus (strain ATCC 15305 / DSM 20229 / NCIMB 8711 / NCTC 7292 / S-41).